The primary structure comprises 562 residues: DNA ligase (562 aa).

Glu-250 is a binding site for ATP. The active-site N6-AMP-lysine intermediate is the Lys-252. 6 residues coordinate ATP: Arg-257, Arg-272, Glu-302, Phe-342, Arg-417, and Lys-423.

The protein belongs to the ATP-dependent DNA ligase family. The cofactor is Mg(2+). Requires Zn(2+) as cofactor.

It catalyses the reaction ATP + (deoxyribonucleotide)n-3'-hydroxyl + 5'-phospho-(deoxyribonucleotide)m = (deoxyribonucleotide)n+m + AMP + diphosphate.. It carries out the reaction NAD(+) + (deoxyribonucleotide)n-3'-hydroxyl + 5'-phospho-(deoxyribonucleotide)m = (deoxyribonucleotide)n+m + AMP + beta-nicotinamide D-nucleotide.. In terms of biological role, DNA ligase that seals nicks in double-stranded DNA during DNA replication, DNA recombination and DNA repair. Can use both ATP and NAD(+), but NAD(+) may be a preferred nucleotide cofactor. This chain is DNA ligase, found in Thermococcus onnurineus (strain NA1).